Here is a 274-residue protein sequence, read N- to C-terminus: 1D-myo-inositol 2-acetamido-2-deoxy-alpha-D-glucopyranoside deacetylase 2 (274 aa).

Zn(2+) is bound by residues His-6, Asp-9, and His-140.

The protein belongs to the MshB deacetylase family. It depends on Zn(2+) as a cofactor.

It carries out the reaction 1D-myo-inositol 2-acetamido-2-deoxy-alpha-D-glucopyranoside + H2O = 1D-myo-inositol 2-amino-2-deoxy-alpha-D-glucopyranoside + acetate. In terms of biological role, catalyzes the deacetylation of 1D-myo-inositol 2-acetamido-2-deoxy-alpha-D-glucopyranoside (GlcNAc-Ins) in the mycothiol biosynthesis pathway. This chain is 1D-myo-inositol 2-acetamido-2-deoxy-alpha-D-glucopyranoside deacetylase 2, found in Saccharopolyspora erythraea (strain ATCC 11635 / DSM 40517 / JCM 4748 / NBRC 13426 / NCIMB 8594 / NRRL 2338).